The primary structure comprises 528 residues: MSDPKVTTQRNPSIVILDFGSQYSELIARRIRETEVYSMVLGYNSSVEELKKLSPQGIILSGGPSSVYEEKAPLCDPSIWDLDIPILGVCYGMQVMVKQLGGLVGEAIGKAEYGKALLQVDDPTALLTNVENGSTMWMSHGDSVKQLPAGFVRLAHTTNTPDAAIACHDRRFYGVQFHPEVVHSTDGMVIIRNFVHNICRSKPDWTTNTFIDEAINDVQEKVGKKRVLLALSGGVDSSTLAFLLKKAIGNQLTCMFIDQGFMRKGEPEFLMEFFDKKFHINVEYINARDRFLDKLQGVSDPEKKRKIIGTEFIRVFEEESLRLGPFDYLAQGTLYPDVIESSGTNIDPKTGERIAVKIKSHHNVGGLPKDLQFKLVEPLRTLFKDEVRKVGRSLGLPEEIVNRHPFPGPGLAIRILGEVTKEKLNCLRDADLIVREEIADAGLYHQIWQAFAVLLPVRSVGVMGDQRTYAWPIVLRCVSSEDGMTADWSRLPNSLLEKISNRIVNEVNGVNRVVLDITSKPPGTIEWE.

Residues 13–204 enclose the Glutamine amidotransferase type-1 domain; that stretch reads SIVILDFGSQ…VHNICRSKPD (192 aa). Cysteine 90 acts as the Nucleophile in catalysis. Active-site residues include histidine 178 and glutamate 180. Residues 205 to 403 enclose the GMPS ATP-PPase domain; the sequence is WTTNTFIDEA…LGLPEEIVNR (199 aa). 232-238 contributes to the ATP binding site; sequence SGGVDSS.

In terms of assembly, homodimer.

The catalysed reaction is XMP + L-glutamine + ATP + H2O = GMP + L-glutamate + AMP + diphosphate + 2 H(+). It participates in purine metabolism; GMP biosynthesis; GMP from XMP (L-Gln route): step 1/1. Functionally, catalyzes the synthesis of GMP from XMP. This Prochlorococcus marinus (strain SARG / CCMP1375 / SS120) protein is GMP synthase [glutamine-hydrolyzing].